Here is a 240-residue protein sequence, read N- to C-terminus: MKLIITEDYQEMSRVAAHHLLGYMSKTRRVNLAITAGSTPKGMYEYLTTLVKGKPWYDNCYFYNFDEIPFRGKEGEGVTITNLRNLFFTPAGIKEENIQKLTIDNYREHDQKLAREGGLDLVVLGLGADGHFCGNLPNTTHFHEQTVEFPIQGEMVDIVAHGELGGDFSLVPDSYVTMGPKSIMAAKNLLIIVSGAGKAQALKNVLQGPVTEDVPASVLQLHPSLMVIADKAAAAELALG.

The active-site Proton acceptor is D66. Residue D129 is part of the active site. Residue H131 is the Proton acceptor of the active site.

The protein belongs to the glucosamine/galactosamine-6-phosphate isomerase family.

This is an uncharacterized protein from Escherichia coli (strain K12).